The following is a 566-amino-acid chain: Putative UDP-glucuronate:xylan alpha-glucuronosyltransferase 5 (566 aa).

The helical; Signal-anchor for type II membrane protein transmembrane segment at 17–37 (LILISLSFLGLLLNFKPLFLL) threads the bilayer. Residues Asp-372 and Asp-374 each coordinate Mn(2+). Residues 372–374 (DAD), 401–403 (NSG), 428–432 (NGGDQ), and 475–480 (HYLGLK) contribute to the substrate site. His-475 contacts Mn(2+).

This sequence belongs to the glycosyltransferase 8 family. Glycogenin subfamily. Mn(2+) serves as cofactor.

The protein resides in the golgi apparatus membrane. Functionally, may be involved in the substitutions of the xylan backbone in stem glucuronoxylan. This Arabidopsis thaliana (Mouse-ear cress) protein is Putative UDP-glucuronate:xylan alpha-glucuronosyltransferase 5 (GUX5).